We begin with the raw amino-acid sequence, 231 residues long: Large ribosomal subunit protein uL1 (231 aa).

The protein belongs to the universal ribosomal protein uL1 family. Part of the 50S ribosomal subunit.

Binds directly to 23S rRNA. The L1 stalk is quite mobile in the ribosome, and is involved in E site tRNA release. In terms of biological role, protein L1 is also a translational repressor protein, it controls the translation of the L11 operon by binding to its mRNA. This Pseudomonas syringae pv. syringae (strain B728a) protein is Large ribosomal subunit protein uL1.